A 346-amino-acid polypeptide reads, in one-letter code: Phosphoribosylformylglycinamidine cyclo-ligase (346 aa).

It belongs to the AIR synthase family.

It is found in the cytoplasm. It catalyses the reaction 2-formamido-N(1)-(5-O-phospho-beta-D-ribosyl)acetamidine + ATP = 5-amino-1-(5-phospho-beta-D-ribosyl)imidazole + ADP + phosphate + H(+). Its pathway is purine metabolism; IMP biosynthesis via de novo pathway; 5-amino-1-(5-phospho-D-ribosyl)imidazole from N(2)-formyl-N(1)-(5-phospho-D-ribosyl)glycinamide: step 2/2. This Brevibacillus brevis (strain 47 / JCM 6285 / NBRC 100599) protein is Phosphoribosylformylglycinamidine cyclo-ligase.